The chain runs to 105 residues: uncharacterized protein (105 aa).

To C.jejuni CJ1463.

This is an uncharacterized protein from Helicobacter pylori (strain ATCC 700392 / 26695) (Campylobacter pylori).